We begin with the raw amino-acid sequence, 469 residues long: ATP synthase subunit beta (469 aa).

Residue 155-162 (GGAGVGKT) participates in ATP binding.

It belongs to the ATPase alpha/beta chains family. F-type ATPases have 2 components, CF(1) - the catalytic core - and CF(0) - the membrane proton channel. CF(1) has five subunits: alpha(3), beta(3), gamma(1), delta(1), epsilon(1). CF(0) has three main subunits: a(1), b(2) and c(9-12). The alpha and beta chains form an alternating ring which encloses part of the gamma chain. CF(1) is attached to CF(0) by a central stalk formed by the gamma and epsilon chains, while a peripheral stalk is formed by the delta and b chains.

The protein resides in the cell inner membrane. It carries out the reaction ATP + H2O + 4 H(+)(in) = ADP + phosphate + 5 H(+)(out). Produces ATP from ADP in the presence of a proton gradient across the membrane. The catalytic sites are hosted primarily by the beta subunits. In Helicobacter pylori (strain P12), this protein is ATP synthase subunit beta.